The primary structure comprises 309 residues: 4-hydroxy-3-methylbut-2-enyl diphosphate reductase (309 aa).

Position 12 (C12) interacts with [4Fe-4S] cluster. (2E)-4-hydroxy-3-methylbut-2-enyl diphosphate is bound by residues H43 and H77. Residues H43 and H77 each coordinate dimethylallyl diphosphate. Residues H43 and H77 each coordinate isopentenyl diphosphate. Residue C99 participates in [4Fe-4S] cluster binding. Residue H127 participates in (2E)-4-hydroxy-3-methylbut-2-enyl diphosphate binding. Residue H127 coordinates dimethylallyl diphosphate. Position 127 (H127) interacts with isopentenyl diphosphate. E129 acts as the Proton donor in catalysis. T167 is a (2E)-4-hydroxy-3-methylbut-2-enyl diphosphate binding site. C197 contributes to the [4Fe-4S] cluster binding site. S225, S226, N227, and S269 together coordinate (2E)-4-hydroxy-3-methylbut-2-enyl diphosphate. Residues S225, S226, N227, and S269 each coordinate dimethylallyl diphosphate. 4 residues coordinate isopentenyl diphosphate: S225, S226, N227, and S269.

This sequence belongs to the IspH family. Requires [4Fe-4S] cluster as cofactor.

The catalysed reaction is isopentenyl diphosphate + 2 oxidized [2Fe-2S]-[ferredoxin] + H2O = (2E)-4-hydroxy-3-methylbut-2-enyl diphosphate + 2 reduced [2Fe-2S]-[ferredoxin] + 2 H(+). It carries out the reaction dimethylallyl diphosphate + 2 oxidized [2Fe-2S]-[ferredoxin] + H2O = (2E)-4-hydroxy-3-methylbut-2-enyl diphosphate + 2 reduced [2Fe-2S]-[ferredoxin] + 2 H(+). It participates in isoprenoid biosynthesis; dimethylallyl diphosphate biosynthesis; dimethylallyl diphosphate from (2E)-4-hydroxy-3-methylbutenyl diphosphate: step 1/1. The protein operates within isoprenoid biosynthesis; isopentenyl diphosphate biosynthesis via DXP pathway; isopentenyl diphosphate from 1-deoxy-D-xylulose 5-phosphate: step 6/6. Functionally, catalyzes the conversion of 1-hydroxy-2-methyl-2-(E)-butenyl 4-diphosphate (HMBPP) into a mixture of isopentenyl diphosphate (IPP) and dimethylallyl diphosphate (DMAPP). Acts in the terminal step of the DOXP/MEP pathway for isoprenoid precursor biosynthesis. The chain is 4-hydroxy-3-methylbut-2-enyl diphosphate reductase from Wolbachia sp. subsp. Brugia malayi (strain TRS).